Reading from the N-terminus, the 772-residue chain is DnaJ homolog subfamily C member 16 (772 aa).

Residues 1-25 form the signal peptide; that stretch reads MELKRLGVSWRFLMVLVLILQSLSA. At 26-533 the chain is on the cytoplasmic side; it reads LDFDPYRVLG…ESLLHSNWRE (508 aa). Residues 29-93 form the J domain; that stretch reads DPYRVLGVSR…EKRTNYDHYG (65 aa). One can recognise a Thioredoxin domain in the interval 119–245; sequence FDESFFHFPF…LRQFVESLLP (127 aa). Residues 534 to 554 traverse the membrane as a helical; Anchor for type IV membrane protein segment; it reads MMPLLSLIFSALFILFGTVMV. Residues 555 to 772 are Extracellular-facing; sequence QAFSDSNEER…FYIPSWPELD (218 aa). Residues 560-591 form a disordered region; sequence SNEERESHPADKEEVPEKAGKTEPSFTKESSS. The span at 561–580 shows a compositional bias: basic and acidic residues; sequence NEERESHPADKEEVPEKAGK. N-linked (GlcNAc...) asparagine glycosylation occurs at asparagine 629.

The protein resides in the endoplasmic reticulum membrane. In terms of biological role, plays an important role in regulating the size of autophagosomes during the formation process. The protein is DnaJ homolog subfamily C member 16 (Dnajc16) of Mus musculus (Mouse).